The sequence spans 253 residues: Toxin PezT (253 aa).

An ATP-binding site is contributed by 39-46 (GQSGAGKT). The Proton acceptor role is filled by Asp66.

It belongs to the zeta toxin family. In terms of assembly, forms a PezA(2)PezT(2) heterotetramer. The heterotetramer is much more stable than either of the proteins alone, and a specific mechanism may be necessary to liberate the toxin.

It carries out the reaction UDP-N-acetyl-alpha-D-glucosamine + ATP = UDP-N-acetyl-alpha-D-glucosamine 3'-phosphate + ADP + H(+). In terms of biological role, toxic component of a type II toxin-antitoxin (TA) system. Phosphorylates UDP-N-acetyl-D-glucosamine (UNAG) on the 3'-hydroxyl group of the N-acetyl-D-glucosamine moiety, yielding UNAG-3P. UNAG-3P inhibits MurA, the first committed step in cell wall synthesis, which is then blocked. Upon expression in E.coli results in decreased cell growth and viability, followed 3 hours later by growth restoration; the toxic effect and phosphorylation of UNAG are neutralized by coexpression with cognate antitoxin PezA. A mutant lacking the last 11 residues is stably maintained in E.coli, unlike the wild-type which undergoes spontaneous mutation. Expression of the deletion mutant in rapidly growing liquid cultures leads to cell bulging, permeabilization and massive lysis by 1 hour. Cells that survive are not able to undergo cytokinesis. Expression in slowly growing cells leads to bulging but not lysis. Acts as a corepressor of its own operon with PezA; it is not clear if it binds DNA alone. This is Toxin PezT (pezT) from Streptococcus pneumoniae serotype 4 (strain ATCC BAA-334 / TIGR4).